The following is an 82-amino-acid chain: UPF0213 protein SSP2268 (82 aa).

The 76-residue stretch at 2–77 folds into the GIY-YIG domain; the sequence is DKHYIYIVKC…KTFSRQKKLK (76 aa).

Belongs to the UPF0213 family.

This Staphylococcus saprophyticus subsp. saprophyticus (strain ATCC 15305 / DSM 20229 / NCIMB 8711 / NCTC 7292 / S-41) protein is UPF0213 protein SSP2268.